A 204-amino-acid chain; its full sequence is Imidazoleglycerol-phosphate dehydratase (204 aa).

The disordered stretch occupies residues 183–204 (DPRMDGITPSTKGTLSESGDSQ). Residues 190 to 204 (TPSTKGTLSESGDSQ) show a composition bias toward polar residues.

It belongs to the imidazoleglycerol-phosphate dehydratase family.

The protein localises to the cytoplasm. It carries out the reaction D-erythro-1-(imidazol-4-yl)glycerol 3-phosphate = 3-(imidazol-4-yl)-2-oxopropyl phosphate + H2O. It functions in the pathway amino-acid biosynthesis; L-histidine biosynthesis; L-histidine from 5-phospho-alpha-D-ribose 1-diphosphate: step 6/9. The chain is Imidazoleglycerol-phosphate dehydratase from Alcanivorax borkumensis (strain ATCC 700651 / DSM 11573 / NCIMB 13689 / SK2).